The primary structure comprises 399 residues: Phosphorylated adapter RNA export protein (399 aa).

The span at 1–10 shows a compositional bias: basic and acidic residues; it reads MALEVRRMEG. The segment at 1–83 is disordered; it reads MALEVRRMEG…SESDDDSSLW (83 aa). The span at 11–22 shows a compositional bias: acidic residues; that stretch reads DVEDGELSDSDS. The span at 37-53 shows a compositional bias: polar residues; that stretch reads SNDGSNAGRPFQSSISS. The span at 68–80 shows a compositional bias: acidic residues; sequence SSDESFSESDDDS.

This sequence belongs to the PHAX family.

Its subcellular location is the nucleus. It localises to the cytoplasm. Its function is as follows. Probably involved in protein and RNA export from the nucleus. This is Phosphorylated adapter RNA export protein (PHAX) from Gallus gallus (Chicken).